The following is a 314-amino-acid chain: Ferrochelatase (314 aa).

Positions 188 and 269 each coordinate Fe cation.

This sequence belongs to the ferrochelatase family.

Its subcellular location is the cytoplasm. It catalyses the reaction heme b + 2 H(+) = protoporphyrin IX + Fe(2+). The protein operates within porphyrin-containing compound metabolism; protoheme biosynthesis; protoheme from protoporphyrin-IX: step 1/1. In terms of biological role, catalyzes the ferrous insertion into protoporphyrin IX. The polypeptide is Ferrochelatase (Campylobacter fetus subsp. fetus (strain 82-40)).